Consider the following 353-residue polypeptide: Cytochrome bc1 complex Rieske iron-sulfur subunit (353 aa).

The disordered stretch occupies residues 1–51; it reads MSSQDIPEENLPAEQDRPHGAAARPADETNPFADPGLPPHEPRVQDVDERA. Residues 40 to 51 are compositionally biased toward basic and acidic residues; sequence HEPRVQDVDERA. Helical transmembrane passes span 60-80, 99-119, and 164-184; these read ALLF…FVAI, FALG…AVHW, and LIRN…VVLL. Positions 246-336 constitute a Rieske domain; it reads KAALMIIRLE…IGVNDEGYLE (91 aa). [2Fe-2S] cluster contacts are provided by cysteine 279, histidine 281, cysteine 298, and histidine 301. Cysteine 284 and cysteine 300 are joined by a disulfide.

The protein belongs to the Rieske iron-sulfur protein family. As to quaternary structure, the cytochrome bc1 complex is composed of a cytochrome b (QcrB), the Rieske iron-sulfur protein (QcrA) and a diheme cytochrome c (QcrC) subunit. Requires [2Fe-2S] cluster as cofactor.

It localises to the cell membrane. In terms of biological role, iron-sulfur subunit of the cytochrome bc1 complex, an essential component of the respiratory electron transport chain required for ATP synthesis. The bc1 complex catalyzes the oxidation of menaquinol and the reduction of cytochrome c in the respiratory chain. The bc1 complex operates through a Q-cycle mechanism that couples electron transfer to generation of the proton gradient that drives ATP synthesis. The protein is Cytochrome bc1 complex Rieske iron-sulfur subunit (qcrA) of Streptomyces coelicolor (strain ATCC BAA-471 / A3(2) / M145).